Reading from the N-terminus, the 267-residue chain is Tryptophan synthase alpha chain (267 aa).

Residues glutamate 47 and aspartate 58 each act as proton acceptor in the active site.

Belongs to the TrpA family. In terms of assembly, tetramer of two alpha and two beta chains.

The catalysed reaction is (1S,2R)-1-C-(indol-3-yl)glycerol 3-phosphate + L-serine = D-glyceraldehyde 3-phosphate + L-tryptophan + H2O. The protein operates within amino-acid biosynthesis; L-tryptophan biosynthesis; L-tryptophan from chorismate: step 5/5. The alpha subunit is responsible for the aldol cleavage of indoleglycerol phosphate to indole and glyceraldehyde 3-phosphate. This Chlorobium phaeobacteroides (strain DSM 266 / SMG 266 / 2430) protein is Tryptophan synthase alpha chain.